Reading from the N-terminus, the 1076-residue chain is Bifunctional glutamine synthetase adenylyltransferase/adenylyl-removing enzyme (1076 aa).

Residues 1-521 form an adenylyl removase region; the sequence is MESSIFKPSS…LHLDIYYRPM (521 aa). Residues 524-1076 are adenylyl transferase; the sequence is VNAQMENDQI…LERNRRRAQR (553 aa). Low complexity predominate over residues 1042-1056; sequence TATASAATQQPQTAP. The tract at residues 1042–1076 is disordered; the sequence is TATASAATQQPQTAPRPRMHVIAPRLERNRRRAQR.

This sequence belongs to the GlnE family. It depends on Mg(2+) as a cofactor.

The catalysed reaction is [glutamine synthetase]-O(4)-(5'-adenylyl)-L-tyrosine + phosphate = [glutamine synthetase]-L-tyrosine + ADP. It carries out the reaction [glutamine synthetase]-L-tyrosine + ATP = [glutamine synthetase]-O(4)-(5'-adenylyl)-L-tyrosine + diphosphate. Its function is as follows. Involved in the regulation of glutamine synthetase GlnA, a key enzyme in the process to assimilate ammonia. When cellular nitrogen levels are high, the C-terminal adenylyl transferase (AT) inactivates GlnA by covalent transfer of an adenylyl group from ATP to specific tyrosine residue of GlnA, thus reducing its activity. Conversely, when nitrogen levels are low, the N-terminal adenylyl removase (AR) activates GlnA by removing the adenylyl group by phosphorolysis, increasing its activity. The regulatory region of GlnE binds the signal transduction protein PII (GlnB) which indicates the nitrogen status of the cell. The polypeptide is Bifunctional glutamine synthetase adenylyltransferase/adenylyl-removing enzyme (Bifidobacterium longum (strain NCC 2705)).